The sequence spans 86 residues: Large ribosomal subunit protein bL31B (86 aa).

Belongs to the bacterial ribosomal protein bL31 family. Type B subfamily. In terms of assembly, part of the 50S ribosomal subunit.

The polypeptide is Large ribosomal subunit protein bL31B (Burkholderia lata (strain ATCC 17760 / DSM 23089 / LMG 22485 / NCIMB 9086 / R18194 / 383)).